The primary structure comprises 1016 residues: Rho family-interacting cell polarization regulator 2 (1016 aa).

A phosphoserine mark is found at serine 21 and serine 37. Positions 44–73 (AVKKPQAKLKKMHNLGHKNSSPPKEPQPKR) are disordered. The span at 48 to 59 (PQAKLKKMHNLG) shows a compositional bias: basic residues. Positions 55–113 (MHNLGHKNSSPPKEPQPKRVEEVYRALKNGLDEYLEVHQTELDKLTTQLKDMRRNSRLG) are involved in cell filopodia formation. Positions 85–112 (LDEYLEVHQTELDKLTTQLKDMRRNSRL) form a coiled coil. At serine 341 the chain carries Phosphoserine. The span at 414–428 (TSTELPPGSQSSQNE) shows a compositional bias: polar residues. Positions 414-469 (TSTELPPGSQSSQNEGLKDSSSASCSSSSREGSEPRPHPEGETQGLGKPEGCPVAT) are disordered. The span at 433–442 (SSSASCSSSS) shows a compositional bias: low complexity. Residues 444 to 454 (EGSEPRPHPEG) are compositionally biased toward basic and acidic residues. Phosphoserine is present on residues serine 520 and serine 532. A disordered region spans residues 636–656 (DSVFSDTETEKNSYRSVHPEA). The span at 643–656 (ETEKNSYRSVHPEA) shows a compositional bias: basic and acidic residues.

This sequence belongs to the RIPOR family. Homooligomer; homooligomerization is regulated by RHOC and leads to the formation of concatemers through the association of N- and C-termini. Interacts (phosphorylated form) with 14-3-3 proteins; these interactions occur during myogenic cell differentiation and also induces T cell proliferation arrest. Interacts (phosphorylated form) with HDAC6; this interaction occurs during early myogenic differentiation, prevents HDAC6 to deacetylate tubulin and also induces T cell proliferation arrest. Interacts with DYSF; this interaction occurs during early myogenic differentiation. Interacts with MYOF. Interacts (via active GTP- or inactive GDP-bound forms) with RHOA; this interaction is direct, blocks the loading of GTP to RHOA and decreases upon chemokine CCL19 stimulation in primary T lymphocytes. Interacts with RHOC. Interacts (via phosphorylated form) with YWHAB; this interaction occurs in a chemokine-dependent manner and does not compete for binding of RIPOR2 with RHOA nor blocks inhibition of RIPOR2-mediated RHOA activity. Interacts with YWHAE. Interacts with YWHAQ. In terms of processing, phosphorylated. Chemokine-induced phosphorylation in neutrophils occurs in a PKC- and AKT-dependent manner, resulting in RIPOR2 interaction with YWHAB and stabilization. Phosphorylated by PKCA, AKT1 and MAPKAPK1A; in vitro.

It is found in the cytoplasm. The protein localises to the cytoskeleton. The protein resides in the cell projection. It localises to the filopodium. Its subcellular location is the apical cell membrane. It is found in the stereocilium. The protein localises to the stereocilium membrane. Its function is as follows. Acts as an inhibitor of the small GTPase RHOA and plays several roles in the regulation of myoblast and hair cell differentiation, lymphocyte T proliferation and neutrophil polarization. Plays a role in fetal mononuclear myoblast differentiation by promoting filopodia and myotube formation. Maintains naive T lymphocytes in a quiescent state and prevents chemokine-induced T lymphocyte responses, such as cell adhesion, polarization and migration. Involved also in the regulation of neutrophil polarization, chemotaxis and adhesion. Required for normal development of inner and outer hair cell stereocilia within the cochlea of the inner ear. Plays a role for maintaining the structural organization of the basal domain of stereocilia. Involved in mechanosensory hair cell function. Required for normal hearing. In Bos taurus (Bovine), this protein is Rho family-interacting cell polarization regulator 2.